The chain runs to 159 residues: MSTQSVVETVTALVKPILDDHHFYLTDVEFVKEGGGWYLRVYIDKTGGITLDECVMVSEALSEKLDAMDPDPIPQQYFLEVSSPGAERPLKHETDYEQAVGDYIHVSLFKKLDGKKVFEGTLKELLPDQLTLTVKDKSRKFDQVIDRQLIASARLAIEF.

The protein belongs to the RimP family.

It localises to the cytoplasm. Required for maturation of 30S ribosomal subunits. The polypeptide is Ribosome maturation factor RimP (Lacticaseibacillus casei (strain BL23) (Lactobacillus casei)).